The sequence spans 99 residues: Large ribosomal subunit protein uL23 (99 aa).

The protein belongs to the universal ribosomal protein uL23 family. Part of the 50S ribosomal subunit. Contacts protein L29, and trigger factor when it is bound to the ribosome.

Its function is as follows. One of the early assembly proteins it binds 23S rRNA. One of the proteins that surrounds the polypeptide exit tunnel on the outside of the ribosome. Forms the main docking site for trigger factor binding to the ribosome. The chain is Large ribosomal subunit protein uL23 from Rhodopseudomonas palustris (strain HaA2).